The primary structure comprises 241 residues: Ribonuclease HII (241 aa).

Residues Asn-57 to Gly-241 enclose the RNase H type-2 domain. Positions 63, 64, and 155 each coordinate a divalent metal cation.

Belongs to the RNase HII family. The cofactor is Mn(2+). Mg(2+) serves as cofactor.

Its subcellular location is the cytoplasm. The catalysed reaction is Endonucleolytic cleavage to 5'-phosphomonoester.. In terms of biological role, endonuclease that specifically degrades the RNA of RNA-DNA hybrids. The chain is Ribonuclease HII from Caldanaerobacter subterraneus subsp. tengcongensis (strain DSM 15242 / JCM 11007 / NBRC 100824 / MB4) (Thermoanaerobacter tengcongensis).